Reading from the N-terminus, the 249-residue chain is DNA polymerase sliding clamp 1 (249 aa).

The protein belongs to the PCNA family. As to quaternary structure, homotrimer. The subunits circularize to form a toroid; DNA passes through its center. Replication factor C (RFC) is required to load the toroid on the DNA.

In terms of biological role, sliding clamp subunit that acts as a moving platform for DNA processing. Responsible for tethering the catalytic subunit of DNA polymerase and other proteins to DNA during high-speed replication. The chain is DNA polymerase sliding clamp 1 from Pyrobaculum aerophilum (strain ATCC 51768 / DSM 7523 / JCM 9630 / CIP 104966 / NBRC 100827 / IM2).